Reading from the N-terminus, the 719-residue chain is ATP-dependent RNA helicase p62 (719 aa).

The interval 94–234 (AQSQRAFRDS…GSQDLPMRPV (141 aa)) is disordered. Basic and acidic residues-rich tracts occupy residues 99–108 (AFRDSSKPDS) and 137–171 (EEIKIEGVMAPHDRDFGHSGRGGRGGDRGGDDRRG). Over residues 172-188 (GGGGGNRFGGGGGGGDY) the composition is skewed to gly residues. Residues 194–205 (GRVEKRRDDRGG) show a composition bias toward basic and acidic residues. Residues 206 to 226 (GNRFGGGGGFGDRRGGGGGGS) show a composition bias toward gly residues. A Q motif motif is present at residues 281–309 (QDFSEVHLPDYVMKEIRRQGYKAPTAIQA). In terms of domain architecture, Helicase ATP-binding spans 312–487 (WPIAMSGSNF…EDFLGNYIQI (176 aa)). 325-332 (AKTGSGKT) is a binding site for ATP. Positions 435–438 (DEAD) match the DEAD box motif. Residues 519–664 (LLSDIYDTSE…EINPALENLA (146 aa)) form the Helicase C-terminal domain. The interval 689 to 719 (GGGFKKGSLSNGRGFGGGGGGGGEGRHSRFD) is disordered. Residues 701-711 (RGFGGGGGGGG) show a composition bias toward gly residues.

Belongs to the DEAD box helicase family. DDX5/DBP2 subfamily. Interacts with Fmr1 to form the RNA-induced silencing complex (RISC), a ribonucleoprotein (RNP) complex involved in translation regulation, other components of the complex are RpL5, RpL11, AGO2 and Dcr-1.

It localises to the nucleus. The protein resides in the nucleolus. The protein localises to the cytoplasm. Its subcellular location is the cytosol. It carries out the reaction ATP + H2O = ADP + phosphate + H(+). Functionally, as an RNA helicase, unwinds RNA and alters RNA structures through ATP binding and hydrolysis. Involved in multiple cellular processes, including pre-mRNA splicing, alternative splicing, rRNA processing and miRNA processing, as well as transcription regulation. Plays a role in innate immunity. Specifically restricts bunyavirus infection, including Rift Valley fever virus (RVFV) or La Crosse virus (LACV), but not vesicular stomatitis virus (VSV), in an interferon- and DROSHA-independent manner. The sequence is that of ATP-dependent RNA helicase p62 (Rm62) from Drosophila melanogaster (Fruit fly).